Here is a 701-residue protein sequence, read N- to C-terminus: DNA-directed RNA polymerase subunit beta' (701 aa).

Residues Cys-76, Cys-78, Cys-94, and Cys-97 each contribute to the Zn(2+) site. 3 residues coordinate Mg(2+): Asp-511, Asp-513, and Asp-515.

Belongs to the RNA polymerase beta' chain family. RpoC1 subfamily. In plastids the minimal PEP RNA polymerase catalytic core is composed of four subunits: alpha, beta, beta', and beta''. When a (nuclear-encoded) sigma factor is associated with the core the holoenzyme is formed, which can initiate transcription. The cofactor is Mg(2+). Zn(2+) serves as cofactor.

The protein resides in the plastid. It localises to the chloroplast. It catalyses the reaction RNA(n) + a ribonucleoside 5'-triphosphate = RNA(n+1) + diphosphate. Functionally, DNA-dependent RNA polymerase catalyzes the transcription of DNA into RNA using the four ribonucleoside triphosphates as substrates. This is DNA-directed RNA polymerase subunit beta' from Pelargonium hortorum (Common geranium).